A 785-amino-acid polypeptide reads, in one-letter code: Probably inactive leucine-rich repeat receptor-like protein kinase At5g58150 (785 aa).

Positions 1–21 (MRLSLWGSLLFFSFFVKHLTS) are cleaved as a signal peptide. Residues 22–436 (LDPNTDAYHL…KVNKKNTGLK (415 aa)) are Extracellular-facing. LRR repeat units follow at residues 64 to 88 (SENV…TIGK), 89 to 112 (MSKL…LWSL), 114 to 136 (LLES…IGNF), 138 to 160 (SLHT…ISNL), 161 to 184 (VNLT…LVHC), 186 to 208 (SLLS…FGSA), 210 to 232 (PLLK…VLHE), 236 to 258 (TVDL…HKHN), 259 to 283 (WSSL…LSSA), 284 to 306 (HKLG…EIGK), 307 to 330 (LSAL…EISR), 331 to 355 (LSHL…SVKN), 357 to 377 (EVLD…LLEK), and 379 to 405 (AMMQ…TIQR). Asn-119 carries an N-linked (GlcNAc...) asparagine glycan. 4 N-linked (GlcNAc...) asparagine glycosylation sites follow: Asn-162, Asn-198, Asn-216, and Asn-258. N-linked (GlcNAc...) asparagine glycosylation is found at Asn-314, Asn-319, and Asn-343. Residues Asn-385, Asn-390, and Asn-397 are each glycosylated (N-linked (GlcNAc...) asparagine). The chain crosses the membrane as a helical span at residues 437–457 (IGLGLAISMAFLLIGLLLILV). Residues 458 to 785 (ALRVRRKSRT…GLLKDISPNY (328 aa)) lie on the Cytoplasmic side of the membrane. Thr-510 and Thr-518 each carry phosphothreonine. Positions 521–785 (FDRGTMLWEG…GLLKDISPNY (265 aa)) constitute a Protein kinase domain. ATP contacts are provided by residues 527–535 (LWEGKSGPT) and Lys-549. Phosphotyrosine occurs at positions 594 and 683.

This sequence belongs to the protein kinase superfamily. Ser/Thr protein kinase family.

The protein localises to the cell membrane. This is Probably inactive leucine-rich repeat receptor-like protein kinase At5g58150 from Arabidopsis thaliana (Mouse-ear cress).